A 919-amino-acid polypeptide reads, in one-letter code: Probable dipeptidyl-aminopeptidase B (919 aa).

Residues 1 to 89 form a disordered region; it reads MGANSRVNDD…DGYVPSGGKP (89 aa). At 1–95 the chain is on the cytoplasmic side; the sequence is MGANSRVNDD…GGKPAQRRTR (95 aa). Positions 27-38 are enriched in low complexity; it reads DSSSTASISLTL. Over residues 44–55 the composition is skewed to polar residues; it reads HTATEPSKSTNG. A helical; Signal-anchor for type II membrane protein membrane pass occupies residues 96-116; sequence IVFWLLVALCVGGWAMAFIIM. Over 117–919 the chain is Vacuolar; sequence ATSPNNRHST…RVIRRLLHFG (803 aa). The disordered stretch occupies residues 121 to 150; it reads NNRHSTSDSSSGGSESEIVKPNTPHDGKKI. Residues 127-136 are compositionally biased toward low complexity; it reads SDSSSGGSES. Asn-207, Asn-303, Asn-355, Asn-577, and Asn-665 each carry an N-linked (GlcNAc...) asparagine glycan. Ser-760 serves as the catalytic Charge relay system. Asn-814 and Asn-819 each carry an N-linked (GlcNAc...) asparagine glycan. Active-site charge relay system residues include Asp-837 and His-870.

Belongs to the peptidase S9B family.

It localises to the vacuole membrane. It catalyses the reaction Release of an N-terminal dipeptide, Xaa-Yaa-|-Zaa-, from a polypeptide, preferentially when Yaa is Pro, provided Zaa is neither Pro nor hydroxyproline.. Functionally, type IV dipeptidyl-peptidase which removes N-terminal dipeptides sequentially from polypeptides having unsubstituted N-termini provided that the penultimate residue is proline. This is Probable dipeptidyl-aminopeptidase B (DAPB) from Arthroderma otae (strain ATCC MYA-4605 / CBS 113480) (Microsporum canis).